We begin with the raw amino-acid sequence, 415 residues long: Histidine--tRNA ligase (415 aa).

The protein belongs to the class-II aminoacyl-tRNA synthetase family. As to quaternary structure, homodimer.

It localises to the cytoplasm. The enzyme catalyses tRNA(His) + L-histidine + ATP = L-histidyl-tRNA(His) + AMP + diphosphate + H(+). The protein is Histidine--tRNA ligase of Clostridium botulinum (strain 657 / Type Ba4).